A 72-amino-acid chain; its full sequence is MEKPTSSTNGEKRKSPCDSNSKNDEMQETPNRDLVLEPSLKKMKTSEYSTVLVLCYRKTKKIHSNQLENDQS.

A disordered region spans residues M1–L40. A compositionally biased stretch (basic and acidic residues) spans G10–V35.

The protein belongs to the SPAN-X family.

The polypeptide is Sperm protein associated with the nucleus on the X chromosome N1 (SPANXN1) (Pan troglodytes (Chimpanzee)).